The chain runs to 617 residues: Regulatory solute carrier protein family 1 member 1 (617 aa).

Residues 1–22 (MSSLPTSDGFNHPARSSGQSPD) show a composition bias toward polar residues. Disordered regions lie at residues 1–106 (MSSL…EITV), 155–181 (ENQN…VAQQ), and 217–237 (KGNG…IPSS). 2 stretches are compositionally biased toward basic and acidic residues: residues 43–52 (SDSDRIEPKA) and 66–83 (SEKK…HASS). Polar residues-rich tracts occupy residues 89 to 103 (TDQS…SSEE) and 155 to 165 (ENQNLSQVSDP). The segment at 410–412 (QCP) is involved in post-transcriptional down-regulation of SLC5A1. Residues 571 to 611 (IFPATDIDRILRAGFTLQEALGALHRVGGNADLALLVLLAK) enclose the UBA domain.

As to quaternary structure, interacts with YRDC. In terms of tissue distribution, expressed in small intestine, kidney and brain.

The protein resides in the cell membrane. It is found in the nucleus. It localises to the golgi apparatus. Its subcellular location is the trans-Golgi network. Functionally, mediates transcriptional and post-transcriptional regulation of SLC5A1. Inhibits a dynamin and PKC-dependent exocytotic pathway of SLC5A1. Also involved in transcriptional regulation of SLC22A2. Exhibits glucose-dependent, short-term inhibition of SLC5A1 and SLC22A2 by inhibiting the release of vesicles from the trans-Golgi network. This Homo sapiens (Human) protein is Regulatory solute carrier protein family 1 member 1 (RSC1A1).